The sequence spans 628 residues: EF-hand calcium-binding domain-containing protein 7 (628 aa).

Residues 1–22 (MASNPGSDAALGTQNPLLSGSP) are compositionally biased toward polar residues. The interval 1–24 (MASNPGSDAALGTQNPLLSGSPRT) is disordered. EF-hand domains are found at residues 102–137 (TSKAELLKSFKKLDVNDDGAILHSDLQKYLTKRGEK) and 138–173 (MTQEEVNAVINLADINANGKFDYVKFCKLYMTTSEQ). The tract at residues 192-231 (QFGSHMEGSPERGPSPAPKPSPRVIRKNDQETFSSKGDTS) is disordered. Phosphoserine is present on residues Ser-200 and Ser-212. Positions 222 to 231 (ETFSSKGDTS) are enriched in polar residues. Positions 402–437 (EFRSTLSEIFEVIDLDGNGLISLEEYNFFELRTSGE) constitute an EF-hand 3 domain. Ca(2+) contacts are provided by Asp-415, Asp-417, Asn-419, and Glu-426.

Component of the EvC complex composed of EFCAB7, IQCE, EVC2 and EVC; built from two subcomplexes, EVC2:EVC and EFCAB7:IQCE. Interacts (via EF-hand 1 and 2) with IQCE (via N-terminus); this interaction anchors the EVC-EVC2 complex in a signaling microdomain at the base of cilia and stimulates the Hedgehog (Hh) pathway. Interacts with EVC2 (via N-terminal end). Interacts with EVC.

The protein resides in the cell projection. It is found in the cilium membrane. Component of the EvC complex that positively regulates ciliary Hedgehog (Hh) signaling. Required for the localization of the EVC2:EVC subcomplex at the base of primary cilia. In Mus musculus (Mouse), this protein is EF-hand calcium-binding domain-containing protein 7 (Efcab7).